The primary structure comprises 98 residues: Plastocyanin (98 aa).

In terms of domain architecture, Plastocyanin-like spans 1 to 98 (AQIVKLGGDD…AGMKMTITVQ (98 aa)). Cu(2+) is bound by residues histidine 38, cysteine 83, histidine 86, and methionine 91.

Belongs to the plastocyanin family. It depends on Cu(2+) as a cofactor.

The protein localises to the plastid. The protein resides in the chloroplast thylakoid membrane. Functionally, participates in electron transfer between P700 and the cytochrome b6-f complex in photosystem I. Has antiviral activity against Potato virus Y (strain N). The chain is Plastocyanin (PETE) from Ulva pertusa (Sea lettuce).